The primary structure comprises 421 residues: Actin-related protein 6 (421 aa).

The protein belongs to the actin family. ARP6 subfamily. Component of the SWR1 chromatin-remodeling complex composed of at least ARP6/ESD1/SUF3, PIE1, SWC6, SWC2 and H2AZs (HTA8, HTA9, HTA11). Interacts directly with SWC6/SEF and PIE1. Also interacts with H2A.F/Z proteins. Mostly expressed in flowers, and, to a lower extent, in seedlings, shoot apex, stems, siliques, seeds, and roots (at protein level).

Its subcellular location is the nucleus. It is found in the cytoplasm. Component of the SWR1 complex which mediates the ATP-dependent exchange of histone H2A for the H2A variant H2A.F/Z leading to transcriptional regulation of selected genes (e.g. FLC) by chromatin remodeling. Binds to the promoter region of FLC chromatin. Required for the activation of FLC and FLC/MAF genes expression to levels that inhibit flowering, through both histone H3 and H4 acetylation and methylation mechanisms. Involved in several developmental processes including organization of plant organs, leaves formation, flowering time repression, and fertility. Modulates photoperiod-dependent epidermal leaves cell development; promotes cell division in long days, and cell expansion/division in short days. May be involved in the regulation of pathogenesis-related proteins (PRs). This chain is Actin-related protein 6 (ARP6), found in Arabidopsis thaliana (Mouse-ear cress).